A 341-amino-acid polypeptide reads, in one-letter code: Uroporphyrinogen decarboxylase (341 aa).

Substrate-binding positions include 25–29 (RQAGR), F44, D74, Y151, S206, and H318.

Belongs to the uroporphyrinogen decarboxylase family. In terms of assembly, homodimer.

It localises to the cytoplasm. It catalyses the reaction uroporphyrinogen III + 4 H(+) = coproporphyrinogen III + 4 CO2. It participates in porphyrin-containing compound metabolism; protoporphyrin-IX biosynthesis; coproporphyrinogen-III from 5-aminolevulinate: step 4/4. In terms of biological role, catalyzes the decarboxylation of four acetate groups of uroporphyrinogen-III to yield coproporphyrinogen-III. The chain is Uroporphyrinogen decarboxylase from Flavobacterium johnsoniae (strain ATCC 17061 / DSM 2064 / JCM 8514 / BCRC 14874 / CCUG 350202 / NBRC 14942 / NCIMB 11054 / UW101) (Cytophaga johnsonae).